The sequence spans 239 residues: Small ribosomal subunit protein uS2 (239 aa).

This sequence belongs to the universal ribosomal protein uS2 family.

This Synechococcus sp. (strain WH7803) protein is Small ribosomal subunit protein uS2.